A 945-amino-acid polypeptide reads, in one-letter code: Isoleucine--tRNA ligase (945 aa).

Over residues 1 to 10 (MSNKKADSKP) the composition is skewed to basic and acidic residues. Residues 1-21 (MSNKKADSKPQAKYPVNLLDT) form a disordered region. The 'HIGH' region signature appears at 66–76 (PYANGDIHLGH). Residue Glu581 coordinates L-isoleucyl-5'-AMP. The 'KMSKS' region signature appears at 622 to 626 (KMSKS). Lys625 lines the ATP pocket. Zn(2+) is bound by residues Cys908, Cys911, Cys928, and Cys931.

This sequence belongs to the class-I aminoacyl-tRNA synthetase family. IleS type 1 subfamily. In terms of assembly, monomer. The cofactor is Zn(2+).

The protein localises to the cytoplasm. The enzyme catalyses tRNA(Ile) + L-isoleucine + ATP = L-isoleucyl-tRNA(Ile) + AMP + diphosphate. Its function is as follows. Catalyzes the attachment of isoleucine to tRNA(Ile). As IleRS can inadvertently accommodate and process structurally similar amino acids such as valine, to avoid such errors it has two additional distinct tRNA(Ile)-dependent editing activities. One activity is designated as 'pretransfer' editing and involves the hydrolysis of activated Val-AMP. The other activity is designated 'posttransfer' editing and involves deacylation of mischarged Val-tRNA(Ile). The sequence is that of Isoleucine--tRNA ligase from Burkholderia multivorans (strain ATCC 17616 / 249).